Here is a 139-residue protein sequence, read N- to C-terminus: Small ribosomal subunit protein uS12 (139 aa).

The tract at residues 118–139 (AGVANRNQSRSRYGTKKPKPKS) is disordered. Residues 130-139 (YGTKKPKPKS) show a composition bias toward basic residues.

This sequence belongs to the universal ribosomal protein uS12 family. As to quaternary structure, part of the 30S ribosomal subunit. Contacts proteins S8 and S17. May interact with IF1 in the 30S initiation complex.

With S4 and S5 plays an important role in translational accuracy. In terms of biological role, interacts with and stabilizes bases of the 16S rRNA that are involved in tRNA selection in the A site and with the mRNA backbone. Located at the interface of the 30S and 50S subunits, it traverses the body of the 30S subunit contacting proteins on the other side and probably holding the rRNA structure together. The combined cluster of proteins S8, S12 and S17 appears to hold together the shoulder and platform of the 30S subunit. In Mycoplasma mobile (strain ATCC 43663 / 163K / NCTC 11711) (Mesomycoplasma mobile), this protein is Small ribosomal subunit protein uS12.